A 569-amino-acid chain; its full sequence is MATPSLISETEAWKDLKAHLEGIKRTHLRELMGDTERCQSMMVEFDNIFLDYSRQQASPDTINKLFKLADAAHLKRKIDRMYNGDHINSTENRSVLHVALRAPRNSAICSDGKNVVPDVWSVLDKIKDFSERVRNGSWVGATGKELKDVIAVGIGGSFLGPLFVHTALQTDPEASKNAIGRELRFLANVDPIDAAKNISGLNPETTLVVVVSKTFTTAETMLNARTLREWISSALGASAVAKHMVAVSTNLPLVEKFGIDPNNAFAFWDWVGGRYSVCSAVGVLPLSLQYGFAVVEKFLQGAHSIDQHFSSAPFEKNIPVLLGLLSVWNVSFLGYPARAILPYSQALEKLAPHIQQVSMESNGKGVSVDGLPLPFESGEIDFGEPGTNGQHSFYQLIHQGRVIPCDFIGVVKSQQPVYLKGEVVNNHDELMSNFFAQPDALAYGKTPEQLKKENVSEHLIPHKTFNGNRPSLSILLPTLDAYRIGQLLAVYEHRVAVQGFVWGINSFDQWGVELGKSLATQVRKQLHASRVKGEAVEEGFNFSTKTLLTRYLEASSDVPADPSTLLPKI.

Catalysis depends on E360, which acts as the Proton donor. Active-site residues include H391 and K516.

This sequence belongs to the GPI family. As to quaternary structure, homodimer.

It localises to the cytoplasm. The enzyme catalyses alpha-D-glucose 6-phosphate = beta-D-fructose 6-phosphate. It participates in carbohydrate degradation; glycolysis; D-glyceraldehyde 3-phosphate and glycerone phosphate from D-glucose: step 2/4. The protein is Glucose-6-phosphate isomerase, cytosolic 2 (PGIC2) of Clarkia concinna (Red ribbons).